The primary structure comprises 1036 residues: MRRKTEIYSVELNGTKDVKPADQRDDKKFKGAKNKDLEPNKSHEKEELKKELDLDDHRLSNTELEQKYGTNIIQGLSSVRATELLARDGPNTLTPPKQTPEIIKFLKQMVGGFSILLWIGAALCWIAFVIQYVNNSASLDNVYLGAILVLVVILTGIFAYYQEAKSTNIMASFSKMIPQQALVIRDAEKKVISAEQLVVGDVVEIKGGDQIPADIRLVFSQGCKVDNSSLTGESEPQARSTEFTHENPLETKNIGFYSTTCLEGTATGIVINTGDRTIIGRIASLASGVGSEKTPIAIEIEHFVHIVAGVAVSIDIIFFITAVCMKYYVLDAIIFLISIIVANVPEGLLATVTVTLSLTAKRMAKKNCLVKNLEAVETLGSTSIICSDKTGTLTQNRMTVAHLWFDNQIFVADTSENQTKQAFDQSSGTWASLSKIITLCNRAEFRPGQESVPIMKRTVVGDASETALLKFSEVILGDVMGIRKRNHKVAEIPFNSTNKFQLSIHETEDPNNKRFLVVMKGAPERILEKCSTIMINGQEQPLDKSSADSFHTAYMELGGLGERVLGFCHLYLPAEQFPQSYIFDVDSVNFPTSNFCFVGLLSMIDPPRSTVPDAVSKCRSAGIKVIMVTGDHPITAKAIAKSVGIISANNETVEDIAKRRNIAVEQVNKREAKAAVVTGMELKDMTPEQLDELLTNYQEIVFARTSPQQKLIIVEGCQRQDAIVAVTGDGVNDSPALKKADIGIAMGIAGSDAAKNAADMVLLDDNFASIVTGVEEGRLIFDNLKKTIAYTLTKNIAELCPFLIYIVAGLPLPIGTITILFIDLGTDIIPSIALAYEKAESDIMNRKPRHKKKDRLVNTQLAIYSYLHIGLMQALGGFLVYFTVYAQQGFWPTSLINLRVAWETDDINDLEDSYGQEWTRYQRKYLEWTGSTAFFVAIMIQQIADLIIRKTRRNSIFQQGLFRNKVIWVGIASQVIVALILSYGLGSVPALSFTMLRVQYWFVAVPHAILIWVYDEMRKLFIRLYPGSWWDKNMYY.

A disordered region spans residues 1–50 (MRRKTEIYSVELNGTKDVKPADQRDDKKFKGAKNKDLEPNKSHEKEELKK). Over 1–99 (MRRKTEIYSV…PNTLTPPKQT (99 aa)) the chain is Cytoplasmic. A compositionally biased stretch (basic and acidic residues) spans 14-50 (GTKDVKPADQRDDKKFKGAKNKDLEPNKSHEKEELKK). A helical transmembrane segment spans residues 100 to 120 (PEIIKFLKQMVGGFSILLWIG). At 121–143 (AALCWIAFVIQYVNNSASLDNVY) the chain is on the lumenal side. The chain crosses the membrane as a helical span at residues 144–164 (LGAILVLVVILTGIFAYYQEA). Topologically, residues 165-300 (KSTNIMASFS…SEKTPIAIEI (136 aa)) are cytoplasmic. The chain crosses the membrane as a helical span at residues 301–320 (EHFVHIVAGVAVSIDIIFFI). Residues 321-332 (TAVCMKYYVLDA) are Lumenal-facing. A helical membrane pass occupies residues 333–350 (IIFLISIIVANVPEGLLA). At 351 to 784 (TVTVTLSLTA…EEGRLIFDNL (434 aa)) the chain is on the cytoplasmic side. Asp-388 acts as the 4-aspartylphosphate intermediate in catalysis. Mg(2+) contacts are provided by Asp-729 and Asp-733. The helical transmembrane segment at 785 to 804 (KKTIAYTLTKNIAELCPFLI) threads the bilayer. Residues 805–814 (YIVAGLPLPI) lie on the Lumenal side of the membrane. Residues 815–835 (GTITILFIDLGTDIIPSIALA) form a helical membrane-spanning segment. Topologically, residues 836-855 (YEKAESDIMNRKPRHKKKDR) are cytoplasmic. Residues 856–878 (LVNTQLAIYSYLHIGLMQALGGF) form a helical membrane-spanning segment. Residues 879 to 930 (LVYFTVYAQQGFWPTSLINLRVAWETDDINDLEDSYGQEWTRYQRKYLEWTG) are Lumenal-facing. Residues 931–950 (STAFFVAIMIQQIADLIIRK) traverse the membrane as a helical segment. At 951–964 (TRRNSIFQQGLFRN) the chain is on the cytoplasmic side. Ser-955 carries the post-translational modification Phosphoserine; by PKA. The helical transmembrane segment at 965–983 (KVIWVGIASQVIVALILSY) threads the bilayer. At 984–998 (GLGSVPALSFTMLRV) the chain is on the lumenal side. Residues 999 to 1019 (QYWFVAVPHAILIWVYDEMRK) traverse the membrane as a helical segment. Over 1020–1036 (LFIRLYPGSWWDKNMYY) the chain is Cytoplasmic.

This sequence belongs to the cation transport ATPase (P-type) (TC 3.A.3) family. Type IIC subfamily. In terms of assembly, the ATPase pump is composed of a catalytic alpha subunit and an auxiliary non-catalytic beta subunit. The alpha subunit pairs with the beta subunit of gastric H(+)/K(+) ATPase ATP4B or the beta subunit of Na(+)/K(+) ATPases ATP1B1 and ATP1B3; this interaction is required for the formation of a functionally active pump and its targeting at the plasma membrane. In terms of tissue distribution, expressed at high levels in distal colon, coagulating and preputial glands; at much lower levels in proximal colon, kidney, uterus, brain, placenta and lung; and at trace levels in heart and forestomach. Expressed in distal colon epithelium (at protein level). Expressed in anterior prostate (at protein level).

The protein resides in the apical cell membrane. It catalyses the reaction K(+)(out) + ATP + H2O + H(+)(in) = K(+)(in) + ADP + phosphate + 2 H(+)(out). It carries out the reaction K(+)(out) + Na(+)(in) + ATP + H2O = K(+)(in) + Na(+)(out) + ADP + phosphate + H(+). With respect to regulation, up-regulated by K(+) ions in a dose-dependent way. In terms of biological role, the catalytic subunit of a H(+)/K(+) ATPase and/or Na(+)/K(+) ATPase pump which transports K(+) ions in exchange for Na(+) and/or H(+) ions across the apical membrane of epithelial cells. Uses ATP as an energy source to pump K(+) ions into the cell while transporting Na(+) and/or H(+) ions to the extracellular compartment. Involved in the maintenance of electrolyte homeostasis through K(+) ion absorption in kidney and colon. In the airway epithelium, may play a primary role in mucus acidification regulating its viscosity and clearance. The polypeptide is Potassium-transporting ATPase alpha chain 2 (Atp12a) (Rattus norvegicus (Rat)).